A 227-amino-acid polypeptide reads, in one-letter code: Ribose-5-phosphate isomerase A (227 aa).

Residues 26 to 29, 82 to 85, and 95 to 98 each bind substrate; these read TGST, DGAD, and KGGG. The active-site Proton acceptor is the E104. Position 122 (K122) interacts with substrate.

Belongs to the ribose 5-phosphate isomerase family. In terms of assembly, homodimer.

The catalysed reaction is aldehydo-D-ribose 5-phosphate = D-ribulose 5-phosphate. It functions in the pathway carbohydrate degradation; pentose phosphate pathway; D-ribose 5-phosphate from D-ribulose 5-phosphate (non-oxidative stage): step 1/1. Catalyzes the reversible conversion of ribose-5-phosphate to ribulose 5-phosphate. The sequence is that of Ribose-5-phosphate isomerase A from Streptococcus pyogenes serotype M28 (strain MGAS6180).